The chain runs to 287 residues: Probable endonuclease 4 (287 aa).

Residues H69, H109, E144, D178, H181, H215, D228, H230, and E260 each contribute to the Zn(2+) site.

Belongs to the AP endonuclease 2 family. Zn(2+) serves as cofactor.

It carries out the reaction Endonucleolytic cleavage to 5'-phosphooligonucleotide end-products.. Its function is as follows. Endonuclease IV plays a role in DNA repair. It cleaves phosphodiester bonds at apurinic or apyrimidinic (AP) sites, generating a 3'-hydroxyl group and a 5'-terminal sugar phosphate. This Thermotoga neapolitana (strain ATCC 49049 / DSM 4359 / NBRC 107923 / NS-E) protein is Probable endonuclease 4.